Here is a 1405-residue protein sequence, read N- to C-terminus: DNA-directed RNA polymerase subunit beta' (1405 aa).

Residues cysteine 71, cysteine 73, cysteine 86, and cysteine 89 each contribute to the Zn(2+) site. Residues aspartate 462, aspartate 464, and aspartate 466 each coordinate Mg(2+). Zn(2+) contacts are provided by cysteine 820, cysteine 893, cysteine 900, and cysteine 903.

This sequence belongs to the RNA polymerase beta' chain family. In terms of assembly, the RNAP catalytic core consists of 2 alpha, 1 beta, 1 beta' and 1 omega subunit. When a sigma factor is associated with the core the holoenzyme is formed, which can initiate transcription. The cofactor is Mg(2+). Zn(2+) serves as cofactor.

The enzyme catalyses RNA(n) + a ribonucleoside 5'-triphosphate = RNA(n+1) + diphosphate. Its function is as follows. DNA-dependent RNA polymerase catalyzes the transcription of DNA into RNA using the four ribonucleoside triphosphates as substrates. This Methylorubrum populi (strain ATCC BAA-705 / NCIMB 13946 / BJ001) (Methylobacterium populi) protein is DNA-directed RNA polymerase subunit beta'.